The chain runs to 373 residues: GTP cyclohydrolase 1 type 2 homolog (373 aa).

A divalent metal cation is bound by residues His67, His68, Asp106, His333, and Glu336.

Belongs to the GTP cyclohydrolase I type 2/NIF3 family. Homohexamer.

This is GTP cyclohydrolase 1 type 2 homolog from Listeria monocytogenes serovar 1/2a (strain ATCC BAA-679 / EGD-e).